A 191-amino-acid chain; its full sequence is Potassium-transporting ATPase KdpC subunit (191 aa).

Residues 6 to 26 (PAILLFILLTLVTGGLYPLLT) traverse the membrane as a helical segment.

Belongs to the KdpC family. In terms of assembly, the system is composed of three essential subunits: KdpA, KdpB and KdpC.

The protein resides in the cell inner membrane. Its function is as follows. Part of the high-affinity ATP-driven potassium transport (or Kdp) system, which catalyzes the hydrolysis of ATP coupled with the electrogenic transport of potassium into the cytoplasm. This subunit acts as a catalytic chaperone that increases the ATP-binding affinity of the ATP-hydrolyzing subunit KdpB by the formation of a transient KdpB/KdpC/ATP ternary complex. This Enterobacter sp. (strain 638) protein is Potassium-transporting ATPase KdpC subunit.